Here is a 161-residue protein sequence, read N- to C-terminus: Nucleotide-binding protein AZOSEA28950 (161 aa).

This sequence belongs to the YajQ family.

Functionally, nucleotide-binding protein. This chain is Nucleotide-binding protein AZOSEA28950, found in Aromatoleum aromaticum (strain DSM 19018 / LMG 30748 / EbN1) (Azoarcus sp. (strain EbN1)).